Reading from the N-terminus, the 147-residue chain is Nucleoside diphosphate kinase (147 aa).

Positions 9, 85, 91, 102, and 112 each coordinate ATP. H115 functions as the Pros-phosphohistidine intermediate in the catalytic mechanism.

Belongs to the NDK family. Mg(2+) is required as a cofactor.

It carries out the reaction a 2'-deoxyribonucleoside 5'-diphosphate + ATP = a 2'-deoxyribonucleoside 5'-triphosphate + ADP. The catalysed reaction is a ribonucleoside 5'-diphosphate + ATP = a ribonucleoside 5'-triphosphate + ADP. In terms of biological role, major role in the synthesis of nucleoside triphosphates other than ATP. The ATP gamma phosphate is transferred to the NDP beta phosphate via a ping-pong mechanism, using a phosphorylated active-site intermediate. In Encephalitozoon cuniculi (strain GB-M1) (Microsporidian parasite), this protein is Nucleoside diphosphate kinase (NDK1).